The sequence spans 86 residues: Small ribosomal subunit protein bS20 (86 aa).

Belongs to the bacterial ribosomal protein bS20 family.

In terms of biological role, binds directly to 16S ribosomal RNA. This Aliarcobacter butzleri (strain RM4018) (Arcobacter butzleri) protein is Small ribosomal subunit protein bS20.